Here is a 261-residue protein sequence, read N- to C-terminus: MELKIARAIIKHGLEDLYEYSDVDVAIVGAGPAGLTAARYLAERGHKVVVYERRFSFGGGIGPGGNMIPKIVVQEEAVPVLRDFKIRYKPVGDGLYTVDPAELIAKLAAGAIDAGAKIILGVHVDDVIFRGDPPRVVGLLWVWTPIQMSGSHVDPLYTQAKAVLDATGHDAEVISIAARKVPELGIEVRGEKSAWAEVSEKLVVEHTGRVAPGLYVAGMAVCTVHGLPRMGPIFGGMLLSGRRAAEIIHKDLVEEVYAVRA.

Residues A33, 52–53 (ER), G60, V124, and 152–154 (HVD) each bind NAD(+). Fe cation is bound by residues D154 and H169. M219 is an NAD(+) binding site. R229 contributes to the glycine binding site.

Belongs to the THI4 family. Homooctamer; tetramer of dimers. Requires Fe(2+) as cofactor.

The catalysed reaction is hydrogen sulfide + glycine + NAD(+) = ADP-5-ethyl-4-methylthiazole-2-carboxylate + nicotinamide + 3 H2O + H(+). Its pathway is cofactor biosynthesis; thiamine diphosphate biosynthesis. Functionally, involved in the biosynthesis of the thiazole moiety of thiamine. Catalyzes the conversion of NAD and glycine to adenosine diphosphate 5-(2-hydroxyethyl)-4-methylthiazole-2-carboxylate (ADT), an adenylated thiazole intermediate, using free sulfide as a source of sulfur. In Pyrobaculum islandicum (strain DSM 4184 / JCM 9189 / GEO3), this protein is Thiamine thiazole synthase.